The chain runs to 44 residues: Somatoliberin (44 aa).

Leu-44 carries the leucine amide modification.

This sequence belongs to the glucagon family.

The protein resides in the secreted. In terms of biological role, GRF is released by the hypothalamus and acts on the adenohypophyse to stimulate the secretion of growth hormone. The polypeptide is Somatoliberin (GHRH) (Ovis aries (Sheep)).